The sequence spans 1658 residues: Silent chromatin protein ESC1 (1658 aa).

A compositionally biased stretch (basic and acidic residues) spans 36-54; that stretch reads DSKMKDQHGYSRVHNDKYR. Disordered regions lie at residues 36–76 and 156–499; these read DSKM…SSHI and TSFQ…LENE. Acidic residues-rich tracts occupy residues 205-214 and 245-254; these read LENDEYELSE and SNDEYAEEEG. Polar residues predominate over residues 262 to 286; it reads GQEQANVENATQISSSDSSEGQNYS. The segment covering 289 to 305 has biased composition (acidic residues); it reads VEMELEDDIDVESDAEK. Positions 335 to 352 are enriched in basic and acidic residues; sequence VIEKYESDEHKVHQRYSE. Acidic residues predominate over residues 365-375; that stretch reads VDDESEDEESQ. Basic and acidic residues predominate over residues 386–397; that stretch reads VYHHNEHELDDK. Over residues 398–407 the composition is skewed to acidic residues; sequence ELIEDIESSD. The span at 408–417 shows a compositional bias: low complexity; that stretch reads SESQSAQESE. 3 stretches are compositionally biased toward basic and acidic residues: residues 425 to 435, 442 to 461, and 471 to 482; these read EYKMKNEKSTS, SESRDQGFAKDAYTKNKVEQ, and DDIIRSSLDKNF. Phosphothreonine is present on Thr500. Ser532 carries the phosphoserine modification. Disordered regions lie at residues 550–584 and 589–608; these read SRNSNCPQKEEQVSESYLGHSNGSNLSGRSLDESE and LKDFTGENNNNLKTDRGDLS. Over residues 568–577 the composition is skewed to polar residues; it reads GHSNGSNLSG. Residues Ser579, Ser583, Ser608, and Ser662 each carry the phosphoserine modification. Disordered stretches follow at residues 770–819, 863–964, and 1082–1115; these read SKET…EDNT, EMSS…VKGT, and ENNTNMHDQVSQACSDSDRDQDSTAEKNVEGSAK. Positions 800–812 are enriched in polar residues; the sequence is QSKNFPGVANSTD. Ser865 and Ser866 each carry phosphoserine. The segment covering 869–878 has biased composition (basic and acidic residues); the sequence is ECVKQNDDGS. Over residues 879 to 905 the composition is skewed to polar residues; that stretch reads KTQISFSTDSPDNFQESNDNTEFSSTK. Ser888 and Ser911 each carry phosphoserine. Residues 918 to 931 show a composition bias toward basic and acidic residues; it reads SLKKELTKAEVVDK. Positions 932-956 are enriched in acidic residues; the sequence is LDEEESEDSYEQDYADPEPGNDEGS. A phosphoserine mark is found at Ser937, Ser1092, Ser1096, Ser1098, Ser1166, Ser1176, and Ser1178. Over residues 1082–1096 the composition is skewed to polar residues; that stretch reads ENNTNMHDQVSQACS. Over residues 1097 to 1115 the composition is skewed to basic and acidic residues; it reads DSDRDQDSTAEKNVEGSAK. The span at 1197 to 1207 shows a compositional bias: polar residues; sequence STDASVNMKSV. The tract at residues 1197–1216 is disordered; sequence STDASVNMKSVSSKERDSDE. 2 positions are modified to phosphoserine: Ser1214 and Ser1254. Basic and acidic residues predominate over residues 1261–1272; sequence VKDKENLHKSEE. The segment at 1261-1315 is disordered; it reads VKDKENLHKSEEPLVEGLQSEQHFEKKDHSENEEEFDTIYGDITSANIHSNAPDD. Ser1290, Ser1326, and Ser1332 each carry phosphoserine. Disordered regions lie at residues 1334–1482 and 1503–1658; these read RLIE…TSPE and PATT…SVDK. Residues 1335 to 1366 show a composition bias toward basic and acidic residues; sequence LIEDSRRGKNQEESDEVNTSRERDLTFEKSVN. Phosphoserine is present on residues Ser1403, Ser1409, Ser1450, and Ser1454. The span at 1407-1423 shows a compositional bias: acidic residues; it reads LNSEPEEAELYELEIEG. Residues 1463–1479 show a composition bias toward polar residues; the sequence is YPYSNSENITAEKSAPT. Residues 1507 to 1537 are compositionally biased toward basic and acidic residues; that stretch reads LEKHDKTNVTSVLDDRSEHLSSHDVDNEPHD. Ser1539 is modified (phosphoserine). Basic and acidic residues-rich tracts occupy residues 1550–1564 and 1575–1591; these read PEHQAVDIPVKVEVK and VLEEQKPSMELINDKSS. 2 positions are modified to phosphoserine: Ser1590 and Ser1591. Residues 1607-1626 are compositionally biased toward basic residues; sequence TKAKKKSRKRNYNSRRRKRK. Polar residues predominate over residues 1648–1658; it reads RGQNTHPSVDK.

As to quaternary structure, interacts with SIR4.

The protein localises to the nucleus. Functionally, involved in the clustering of telomeres at the nuclear periphery, forming discrete subcompartments that accumulate a complex of histone-binding silencing factors like SIR4. Required for SIR4-mediated anchoring and partitioning of plasmids. This Saccharomyces cerevisiae (strain ATCC 204508 / S288c) (Baker's yeast) protein is Silent chromatin protein ESC1 (ESC1).